The sequence spans 704 residues: Glycine--tRNA ligase beta subunit (704 aa).

Belongs to the class-II aminoacyl-tRNA synthetase family. Tetramer of two alpha and two beta subunits.

It localises to the cytoplasm. The catalysed reaction is tRNA(Gly) + glycine + ATP = glycyl-tRNA(Gly) + AMP + diphosphate. The chain is Glycine--tRNA ligase beta subunit from Rhizobium etli (strain ATCC 51251 / DSM 11541 / JCM 21823 / NBRC 15573 / CFN 42).